Here is a 245-residue protein sequence, read N- to C-terminus: Ribonuclease 3 (245 aa).

The RNase III domain occupies 19 to 148 (FRAFQQKLGI…FIGALYLDQG (130 aa)). Residue Glu-61 participates in Mg(2+) binding. Asp-65 is a catalytic residue. Positions 134 and 137 each coordinate Mg(2+). Glu-137 is a catalytic residue. A DRBM domain is found at 174–243 (DYKSQLQELI…AAEALRKLKE (70 aa)).

This sequence belongs to the ribonuclease III family. In terms of assembly, homodimer. Requires Mg(2+) as cofactor.

The protein localises to the cytoplasm. It carries out the reaction Endonucleolytic cleavage to 5'-phosphomonoester.. In terms of biological role, digests double-stranded RNA. Involved in the processing of primary rRNA transcript to yield the immediate precursors to the large and small rRNAs (23S and 16S). Processes some mRNAs, and tRNAs when they are encoded in the rRNA operon. Processes pre-crRNA and tracrRNA of type II CRISPR loci if present in the organism. The chain is Ribonuclease 3 from Bacillus cytotoxicus (strain DSM 22905 / CIP 110041 / 391-98 / NVH 391-98).